A 90-amino-acid polypeptide reads, in one-letter code: Small ribosomal subunit protein uS15 (90 aa).

It belongs to the universal ribosomal protein uS15 family. In terms of assembly, part of the 30S ribosomal subunit. Forms a bridge to the 50S subunit in the 70S ribosome, contacting the 23S rRNA.

One of the primary rRNA binding proteins, it binds directly to 16S rRNA where it helps nucleate assembly of the platform of the 30S subunit by binding and bridging several RNA helices of the 16S rRNA. In terms of biological role, forms an intersubunit bridge (bridge B4) with the 23S rRNA of the 50S subunit in the ribosome. This chain is Small ribosomal subunit protein uS15, found in Helicobacter pylori (strain HPAG1).